We begin with the raw amino-acid sequence, 492 residues long: Probable cytochrome P450 313a3 (492 aa).

Residue Cys438 participates in heme binding.

The protein belongs to the cytochrome P450 family. Heme serves as cofactor.

It is found in the endoplasmic reticulum membrane. It localises to the microsome membrane. May be involved in the metabolism of insect hormones and in the breakdown of synthetic insecticides. This chain is Probable cytochrome P450 313a3 (Cyp313a3), found in Drosophila melanogaster (Fruit fly).